We begin with the raw amino-acid sequence, 405 residues long: Mitochondrial outer membrane protein SLC25A46 (405 aa).

Positions methionine 1–proline 77 are disordered. Over residues phenylalanine 22–serine 37 the composition is skewed to low complexity. The Solcar 1 repeat unit spans residues glutamine 80–proline 171. The next 6 membrane-spanning stretches (helical) occupy residues phenylalanine 87 to phenylalanine 107, phenylalanine 151 to proline 171, valine 183 to alanine 203, leucine 242 to isoleucine 262, phenylalanine 302 to leucine 322, and methionine 371 to leucine 391. Residues aspartate 299 to leucine 401 form a Solcar 2 repeat.

Belongs to the mitochondrial carrier (TC 2.A.29) family.

The protein localises to the mitochondrion outer membrane. Its function is as follows. Transmembrane protein of the mitochondrial outer membrane that controls mitochondrial organization. May regulate the biogenesis and dynamics of mitochondrial cristae, the inwards folds of the inner mitochondrial membrane. Could regulate mitochondrial lipid homeostasis and thereby mitochondrial fission. This Danio rerio (Zebrafish) protein is Mitochondrial outer membrane protein SLC25A46 (slc25a46).